We begin with the raw amino-acid sequence, 198 residues long: Putative 3-methyladenine DNA glycosylase (198 aa).

Belongs to the DNA glycosylase MPG family.

The chain is Putative 3-methyladenine DNA glycosylase from Oceanobacillus iheyensis (strain DSM 14371 / CIP 107618 / JCM 11309 / KCTC 3954 / HTE831).